Here is a 454-residue protein sequence, read N- to C-terminus: MKLATAFTILTAVLAAPLAAPAPAPDAAPAAVPEGPAAAAYSSILSVVAKQSKKFKHHKRDLDEKDQFIVVFDSSATVDQIASEIQKLDSLVDEDSSNGITSALDLPVYTDGSGFLGFVGKFNSTIVDKLKESSVLTVEPDTIVSLPEIPASSNAKRAIQTTPVTQWGLSRISHKKAQTGNYAYVRETVGKHPTVSYVVDSGIRTTHSEFGGRAVWGANFADTQNADLLGHGTHVAGTVGGKTYGVDANTKLVAVKVFAGRSAALSVINQGFTWALNDYISKRDTLPRGVLNFSGGGPKSASQDALWSRATQEGLLVAIAAGNDAVDACNDSPGNIGGSTSGIITVGSIDSSDKISVWSGGQGSNYGTCVDVFAPGSDIISASYQSDSGTLVYSGTSMACPHVAGLASYYLSINDEVLTPAQVEALITESNTGVLPTTNLKGSPNAVAYNGVGI.

Positions 1–15 (MKLATAFTILTAVLA) are cleaved as a signal peptide. Residues 16–157 (APLAAPAPAP…EIPASSNAKR (142 aa)) constitute a propeptide that is removed on maturation. Residues 68-146 (FIVVFDSSAT…TVEPDTIVSL (79 aa)) enclose the Inhibitor I9 domain. Residue Asn123 is glycosylated (N-linked (GlcNAc...) asparagine). Residues 166-454 (QWGLSRISHK…NAVAYNGVGI (289 aa)) form the Peptidase S8 domain. Active-site charge relay system residues include Asp200, His231, and Ser397.

The protein belongs to the peptidase S8 family. Post-translationally, the pro-region is removed through cleavage by XPR6 after Lys156-Arg157, which yields mature active XPR2. In terms of processing, the 10 consecutive -X-Ala- or -X-Pro- dipeptides located over 100 amino acids upstream of the N-terminal of mature XPR2 are subject to dipeptidyl aminopeptidase (DPAPase)-processing. DPAPase activity is not necessary for XPR6 cleavage and for secretion of mature active XPR2. N-glycosylated. Glycosylation within the pro-region has no effect on secretion and maturation at 18 degrees Celsius, but is required for secretion at 28 degrees Celsius.

It localises to the secreted. It catalyses the reaction Hydrolysis of proteins with broad specificity for peptide bonds, and a preference for a large uncharged residue in P1. Hydrolyzes peptide amides.. Its activity is regulated as follows. The protease activity is completely inhibited by the serine inhibitor PMSF but is not affected by thiol group inhibitors and in the presence of dithiothreitol. In the presence of high concentrations of o-phenanthroline the protease activity is only partially inhibited. The pro-region plays an inhibitory role and may provide a mechanism for preventing premature activation in the secretory pathway. Its function is as follows. Major secreted protein that belongs to the subtilisin family serine proteases. The sequence is that of Alkaline extracellular protease from Yarrowia lipolytica (strain CLIB 122 / E 150) (Yeast).